Consider the following 171-residue polypeptide: Peptide deformylase (171 aa).

The Fe cation site is built by cysteine 91 and histidine 133. The active site involves glutamate 134. Histidine 137 is a Fe cation binding site.

This sequence belongs to the polypeptide deformylase family. Fe(2+) is required as a cofactor.

It carries out the reaction N-terminal N-formyl-L-methionyl-[peptide] + H2O = N-terminal L-methionyl-[peptide] + formate. Its function is as follows. Removes the formyl group from the N-terminal Met of newly synthesized proteins. Requires at least a dipeptide for an efficient rate of reaction. N-terminal L-methionine is a prerequisite for activity but the enzyme has broad specificity at other positions. The chain is Peptide deformylase from Hamiltonella defensa subsp. Acyrthosiphon pisum (strain 5AT).